Here is a 349-residue protein sequence, read N- to C-terminus: Anthranilate phosphoribosyltransferase (349 aa).

Residues G84, 87-88 (GD), T92, 94-97 (NIST), 112-120 (KHGNRAASS), and S124 contribute to the 5-phospho-alpha-D-ribose 1-diphosphate site. G84 provides a ligand contact to anthranilate. Residue S96 coordinates Mg(2+). N115 is a binding site for anthranilate. Position 170 (R170) interacts with anthranilate. D228 and E229 together coordinate Mg(2+).

The protein belongs to the anthranilate phosphoribosyltransferase family. In terms of assembly, homodimer. Requires Mg(2+) as cofactor.

The enzyme catalyses N-(5-phospho-beta-D-ribosyl)anthranilate + diphosphate = 5-phospho-alpha-D-ribose 1-diphosphate + anthranilate. It participates in amino-acid biosynthesis; L-tryptophan biosynthesis; L-tryptophan from chorismate: step 2/5. Functionally, catalyzes the transfer of the phosphoribosyl group of 5-phosphorylribose-1-pyrophosphate (PRPP) to anthranilate to yield N-(5'-phosphoribosyl)-anthranilate (PRA). The protein is Anthranilate phosphoribosyltransferase of Leifsonia xyli subsp. xyli (strain CTCB07).